The primary structure comprises 848 residues: Trimethylamine-N-oxide reductase 1 (848 aa).

A signal peptide (tat-type signal) is located at residues 1-39 (MNNNDLFQASRRRFLAQLGGLTVAGMLGPSLLTSRRATA). Ser191 lines the Mo-bis(molybdopterin guanine dinucleotide) pocket.

This sequence belongs to the prokaryotic molybdopterin-containing oxidoreductase family. In terms of assembly, interacts with the N-terminal domain of TorC. Mo-bis(molybdopterin guanine dinucleotide) serves as cofactor. In terms of processing, predicted to be exported by the Tat system. The position of the signal peptide cleavage has not been experimentally proven.

It localises to the periplasm. The enzyme catalyses trimethylamine + 2 Fe(III)-[cytochrome c] + H2O = trimethylamine N-oxide + 2 Fe(II)-[cytochrome c] + 3 H(+). In terms of biological role, reduces trimethylamine-N-oxide (TMAO) into trimethylamine; an anaerobic reaction coupled to energy-yielding reactions. The sequence is that of Trimethylamine-N-oxide reductase 1 (torA) from Escherichia coli O157:H7.